Consider the following 644-residue polypeptide: Complement component C1q receptor (644 aa).

An N-terminal signal peptide occupies residues 1–22 (MAISTGLFLLLGLLGQPWAGAA). Over 23–572 (ADSQAVVCEG…SAHSDTDGQN (550 aa)) the chain is Extracellular. In terms of domain architecture, C-type lectin spans 31–173 (EGTACYTAHW…CGTPEAPGNS (143 aa)). Residue Asn102 is glycosylated (N-linked (GlcNAc...) asparagine). 16 cysteine pairs are disulfide-bonded: Cys140-Cys164, Cys261-Cys272, Cys268-Cys282, Cys284-Cys297, Cys303-Cys314, Cys308-Cys325, Cys327-Cys340, Cys346-Cys355, Cys351-Cys364, Cys366-Cys380, Cys386-Cys397, Cys393-Cys406, Cys408-Cys422, Cys428-Cys440, Cys436-Cys449, and Cys451-Cys464. EGF-like domains are found at residues 257–298 (PKFG…VTCA) and 299–341 (SRNP…VHCV). N-linked (GlcNAc...) asparagine glycosylation is present at Asn322. In terms of domain architecture, EGF-like 3; calcium-binding spans 342 to 381 (DIDECQDSPCAQDCVNTLGSFHCECWVGYQPSGPKEEACE). An EGF-like 4; calcium-binding domain is found at 382-423 (DVDECAAANSPCAQGCINTDGSFYCSCKEGYIVSGEDSTQCE). One can recognise an EGF-like 5; calcium-binding domain in the interval 424-465 (DIDECSDARGNPCDSLCFNTDGSFRCGCPPGWELAPNGVFCS). The interval 473–508 (LPARPPQKEDNDDRKESTMPPTEMPSSPSGSKDVSN) is disordered. Residues 478 to 489 (PQKEDNDDRKES) are compositionally biased toward basic and acidic residues. Residues 490 to 501 (TMPPTEMPSSPS) show a composition bias toward low complexity. A helical transmembrane segment spans residues 573 to 593 (LLLFYILGTVVAISLLLVLAL). Over 594-644 (GILIYHKRRAKKEEIKEKKPQNAADSYSWVPERAESQAPENQYSPTPGTDC) the chain is Cytoplasmic. The tract at residues 605-644 (KEEIKEKKPQNAADSYSWVPERAESQAPENQYSPTPGTDC) is disordered. Ser619 is modified (phosphoserine). Residues Tyr620 and Tyr636 each carry the phosphotyrosine modification. A compositionally biased stretch (polar residues) spans 631–644 (APENQYSPTPGTDC).

As to quaternary structure, homodimer. Interacts with C1QBP; the association may represent a cell surface C1q receptor. Interacts with surfactant protein A/SFTPA1. Interacts with multimerin-2/MMRN2. Interacts with DAG1; this interaction plays an important role in endothelial cell migration. Interacts with CBL. Interacts with IGFBP7. Interacts with VEGFR2. N- and O-glycosylated. In terms of processing, phosphorylated on Tyr-620 and Tyr-636 by SRC; these phosphorylations promote endothelial cell adhesion and migration. In terms of tissue distribution, expressed in lung, heart and bone marrow. Expressed at lower level in ovary, whole embryo and fetal liver. Not detected in brain, adult liver or thymus. Highly expressed in peritoneal cavity and bone marrow macrophages. Not detected in epithelial cells.

It is found in the cell membrane. In terms of biological role, cell surface receptor that plays a role in various physiological processes including inflammation, phagocytosis, and cell adhesion. Plays a role in phagocytosis and enhances the uptake of apoptotic cells and immune complexes by acting as a receptor for defense collagens including surfactant protein A/SFTPA1, C1q, and mannose-binding lectin (MBL2). Plays a role in the regulation of endothelial cell function and adhesion by activating angiogenesis. Mechanistically, exerts its angiogenic function by associating with beta-dystroglycan, leading to SRC-dependent phosphorylation and subsequent recruitment of CBL. In turn, CBL provides a docking site for downstream signaling components, such as CRKL to enhance cell migration. Participates in angiogenesis also by acting as a receptor for the ECM pan-endothelial glycoprotein multimerin-2/MMRN2 and IGFBP7 ligands. Both ligands play a non-redundant role in CD93-mediated endothelial cell function. Acts as a key regulator of endothelial barrier function through modulating VEGFR2 function. This is Complement component C1q receptor (Cd93) from Mus musculus (Mouse).